The primary structure comprises 132 residues: Small ribosomal subunit protein uS8c (132 aa).

It belongs to the universal ribosomal protein uS8 family. Part of the 30S ribosomal subunit.

The protein resides in the plastid. It is found in the chloroplast. In terms of biological role, one of the primary rRNA binding proteins, it binds directly to 16S rRNA central domain where it helps coordinate assembly of the platform of the 30S subunit. This is Small ribosomal subunit protein uS8c (rps8) from Thalassiosira pseudonana (Marine diatom).